We begin with the raw amino-acid sequence, 368 residues long: Anaphase-promoting complex subunit MND2 (368 aa).

Disordered stretches follow at residues 140-167 (AQNAEGNNEEDFRQHDSREEDPRNNGSI) and 286-336 (RNPY…GITP). Residues 149–162 (EDFRQHDSREEDPR) are compositionally biased toward basic and acidic residues. The residue at position 293 (serine 293) is a Phosphoserine.

It belongs to the APC15 family. As to quaternary structure, the APC/C is composed of at least 13 subunits that stay tightly associated throughout the cell cycle: APC1, APC2, APC4, APC5, APC9, APC11, CDC16, CDC23, CDC26, CDC27, DOC1, MND2 and SWM1. MND2 interacts directly with APC1, APC5 and CDC23.

It participates in protein modification; protein ubiquitination. In terms of biological role, component of the anaphase promoting complex/cyclosome (APC/C), a cell cycle-regulated E3 ubiquitin-protein ligase complex that controls progression through mitosis and the G1 phase of the cell cycle. The APC/C is thought to confer substrate specificity and, in the presence of ubiquitin-conjugating E2 enzymes, it catalyzes the formation of protein-ubiquitin conjugates that are subsequently degraded by the 26S proteasome. In early mitosis, the APC/C is activated by CDC20 and targets securin PDS1, the B-type cyclin CLB5, and other anaphase inhibitory proteins for proteolysis, thereby triggering the separation of sister chromatids at the metaphase-to-anaphase transition. In late mitosis and in G1, degradation of CLB5 allows activation of the APC/C by CDH1, which is needed to destroy CDC20 and the B-type cyclin CLB2 to allow exit from mitosis and creating the low CDK state necessary for cytokinesis and for reforming prereplicative complexes in G1 prior to another round of replication. This Saccharomyces cerevisiae (strain ATCC 204508 / S288c) (Baker's yeast) protein is Anaphase-promoting complex subunit MND2 (MND2).